Reading from the N-terminus, the 287-residue chain is Nucleotide-binding protein MXAN_6564 (287 aa).

13–20 serves as a coordination point for ATP; that stretch reads GMSGSGKS. Residue 62 to 65 coordinates GTP; that stretch reads DVRE.

The protein belongs to the RapZ-like family.

Its function is as follows. Displays ATPase and GTPase activities. The polypeptide is Nucleotide-binding protein MXAN_6564 (Myxococcus xanthus (strain DK1622)).